Reading from the N-terminus, the 1031-residue chain is Semaphorin-6A (1031 aa).

A signal peptide spans 1–18 (MRPAALLLCLTLLHCAGA). Residues 19–649 (GFPEDSEPIS…KSNDQLVPVT (631 aa)) lie on the Extracellular side of the membrane. The Sema domain occupies 24-512 (SEPISISHGN…FSTCVIKVPL (489 aa)). 3 N-linked (GlcNAc...) asparagine glycosylation sites follow: Asn-33, Asn-49, and Asn-65. 4 cysteine pairs are disulfide-bonded: Cys-107-Cys-117, Cys-135-Cys-144, Cys-258-Cys-369, and Cys-283-Cys-328. Residue Asn-282 is glycosylated (N-linked (GlcNAc...) asparagine). 2 N-linked (GlcNAc...) asparagine glycosylation sites follow: Asn-434 and Asn-461. 4 disulfide bridges follow: Cys-477–Cys-506, Cys-515–Cys-533, Cys-521–Cys-568, and Cys-525–Cys-542. A helical membrane pass occupies residues 650–670 (LLAIAVILAFVMGAVFSGIIV). The Cytoplasmic portion of the chain corresponds to 671–1031 (YCVCDHRRKD…TSMKPNDACT (361 aa)). Ser-698 carries the phosphoserine modification. 3 disordered regions span residues 754-777 (ALPT…SREW), 861-902 (SSKS…TGLS), and 914-1031 (GLEY…DACT). Over residues 921–931 (YPTNSLTRSHQ) the composition is skewed to polar residues. Low complexity predominate over residues 932–951 (TTTLKRNNTNSSNSSHLSRN). Ser-953 carries the phosphoserine modification. Composition is skewed to polar residues over residues 971 to 998 (QVHS…SLTR) and 1019 to 1031 (PLST…DACT).

The protein belongs to the semaphorin family. In terms of assembly, active as a homodimer or oligomer. The SEMA6A homodimer interacts with a PLXNA2 homodimer, giving rise to a heterotetramer. Interacts with EVL. As to expression, particularly high levels in spinal cord, cerebellum, metencephalon, superior and inferior colliculus, diencephalon, olfactory bulb and eye.

Its subcellular location is the cell membrane. In terms of biological role, cell surface receptor for PLXNA2 that plays an important role in cell-cell signaling. Required for normal granule cell migration in the developing cerebellum. Promotes reorganization of the actin cytoskeleton and plays an important role in axon guidance in the developing central nervous system. Can act as repulsive axon guidance cue. Has repulsive action towards migrating granular neurons. May play a role in channeling sympathetic axons into the sympathetic chains and controlling the temporal sequence of sympathetic target innervation. In Mus musculus (Mouse), this protein is Semaphorin-6A (Sema6a).